A 148-amino-acid chain; its full sequence is MAGNRRIRVVVGGVFDILHVGHIHFLKMAKELGDELIVIVAHDETVKKRKGRPPINPAEDRAEVLRAIRYVDDVVIGEPGEISLELIKKLKPDVIALGPDQDFDCRTLKEKLRSIGLKVEVIRLPYLYKEDRAKTSKIIKRITEIFCD.

ATP is bound by residues 14–15 (VF), 19–22 (HVGH), and Asp100.

It belongs to the archaeal FAD synthase family. As to quaternary structure, homodimer. A divalent metal cation is required as a cofactor.

The enzyme catalyses FMN + ATP + H(+) = FAD + diphosphate. Its pathway is cofactor biosynthesis; FAD biosynthesis; FAD from FMN: step 1/1. Its function is as follows. Catalyzes the transfer of the AMP portion of ATP to flavin mononucleotide (FMN) to produce flavin adenine dinucleotide (FAD) coenzyme. The polypeptide is FAD synthase (Pyrococcus abyssi (strain GE5 / Orsay)).